Consider the following 180-residue polypeptide: ATP-dependent protease subunit HslV (180 aa).

Threonine 5 is an active-site residue. The Na(+) site is built by glycine 165, cysteine 168, and threonine 171.

This sequence belongs to the peptidase T1B family. HslV subfamily. As to quaternary structure, a double ring-shaped homohexamer of HslV is capped on each side by a ring-shaped HslU homohexamer. The assembly of the HslU/HslV complex is dependent on binding of ATP.

Its subcellular location is the cytoplasm. The catalysed reaction is ATP-dependent cleavage of peptide bonds with broad specificity.. With respect to regulation, allosterically activated by HslU binding. In terms of biological role, protease subunit of a proteasome-like degradation complex believed to be a general protein degrading machinery. The protein is ATP-dependent protease subunit HslV of Helicobacter pylori (strain ATCC 700392 / 26695) (Campylobacter pylori).